The chain runs to 257 residues: tRNA uridine(34) hydroxylase (257 aa).

Residues 128-222 (NGRRLVMLDA…YFEQVGGEGY (95 aa)) enclose the Rhodanese domain. Cysteine 182 functions as the Cysteine persulfide intermediate in the catalytic mechanism.

It belongs to the TrhO family.

The catalysed reaction is uridine(34) in tRNA + AH2 + O2 = 5-hydroxyuridine(34) in tRNA + A + H2O. Its function is as follows. Catalyzes oxygen-dependent 5-hydroxyuridine (ho5U) modification at position 34 in tRNAs. The sequence is that of tRNA uridine(34) hydroxylase from Xylella fastidiosa (strain M23).